The following is an 87-amino-acid chain: Polyketide-8 synthase acyl carrier protein 2 (87 aa).

Residues 8-83 enclose the Carrier domain; that stretch reads ALDKEQLREL…GTYELLTSKL (76 aa). S43 carries the O-(pantetheine 4'-phosphoryl)serine modification.

Post-translationally, 4'-phosphopantetheine is transferred from CoA to a specific serine of the apo-ACP-like protein.

In terms of biological role, acyl carrier protein. The sequence is that of Polyketide-8 synthase acyl carrier protein 2 from Streptomyces avermitilis (strain ATCC 31267 / DSM 46492 / JCM 5070 / NBRC 14893 / NCIMB 12804 / NRRL 8165 / MA-4680).